The chain runs to 190 residues: Threonylcarbamoyl-AMP synthase (190 aa).

In terms of domain architecture, YrdC-like spans 7 to 190; sequence RDAIAAAIDV…ALTGELFRQG (184 aa).

It belongs to the SUA5 family. TsaC subfamily.

The protein localises to the cytoplasm. It catalyses the reaction L-threonine + hydrogencarbonate + ATP = L-threonylcarbamoyladenylate + diphosphate + H2O. Required for the formation of a threonylcarbamoyl group on adenosine at position 37 (t(6)A37) in tRNAs that read codons beginning with adenine. Catalyzes the conversion of L-threonine, HCO(3)(-)/CO(2) and ATP to give threonylcarbamoyl-AMP (TC-AMP) as the acyladenylate intermediate, with the release of diphosphate. This Escherichia coli O9:H4 (strain HS) protein is Threonylcarbamoyl-AMP synthase.